A 289-amino-acid polypeptide reads, in one-letter code: Inorganic pyrophosphatase (289 aa).

Ser-2 carries the post-translational modification N-acetylserine. Lys-57 is subject to N6-acetyllysine. Residues Asp-116, Asp-121, and Asp-153 each contribute to the Mg(2+) site. At Lys-228 the chain carries N6-acetyllysine. At Ser-250 the chain carries Phosphoserine.

It belongs to the PPase family. Homodimer. Requires Mg(2+) as cofactor.

The protein localises to the cytoplasm. It catalyses the reaction diphosphate + H2O = 2 phosphate + H(+). The chain is Inorganic pyrophosphatase (Ppa1) from Mus musculus (Mouse).